The primary structure comprises 374 residues: Multicilin (374 aa).

A coiled-coil region spans residues 164-212; it reads EQYWRDVADHNQKALGDALVENNQLQVSLTEKQEEIVSLKEKNIQLNEL. A disordered region spans residues 230-260; sequence RTKQNSGATQGRLPVKRSLEDFYPQSNEPDS. Residues 330–374 form a TIRT domain region; the sequence is TDLEDVSFRTSIKEHSTIRTLAFPQGNAFTIRTSGGGYKFRWVPN.

The protein belongs to the geminin family. Component of the EDM complex, at least composed of e2f4, e2f5, mcidas and tfdp1. In terms of tissue distribution, expressed in multiciliate differentiating cells. Expression is lost by stage 26, when multiciliate cells in the skin are fully differentiated, but is then detected in the developing nephrostomes of the kidneys where multiciliate cells form at later stages.

Its subcellular location is the nucleus. Transcription regulator specifically required for multiciliate cell differentiation. Acts in a multiprotein complex containing E2F4 and E2F5 that binds and activates genes required for centriole biogenesis. Activates genes required for centriole assembly (plk4, cep152) and genes specifically required for motile cilia formation (foxj1). Also promotes the deuterosome pathway of centriole biogenesis by activating expression of ccdc67/deup1, but not its paralog cep63. The chain is Multicilin (mcidas) from Xenopus laevis (African clawed frog).